We begin with the raw amino-acid sequence, 906 residues long: Protein translocase subunit SecA (906 aa).

ATP-binding positions include glutamine 90, 108 to 112 (GEGKT), and aspartate 503. The segment at 845–882 (TAAEAPASVPQPQAAVAPQPAPELVGADNGESQPQAWG) is disordered. Positions 846–862 (AAEAPASVPQPQAAVAP) are enriched in low complexity. The Zn(2+) site is built by cysteine 890, cysteine 892, cysteine 901, and histidine 902.

This sequence belongs to the SecA family. In terms of assembly, monomer and homodimer. Part of the essential Sec protein translocation apparatus which comprises SecA, SecYEG and auxiliary proteins SecDF-YajC and YidC. Requires Zn(2+) as cofactor.

The protein resides in the cell inner membrane. It localises to the cytoplasm. The catalysed reaction is ATP + H2O + cellular proteinSide 1 = ADP + phosphate + cellular proteinSide 2.. Its function is as follows. Part of the Sec protein translocase complex. Interacts with the SecYEG preprotein conducting channel. Has a central role in coupling the hydrolysis of ATP to the transfer of proteins into and across the cell membrane, serving both as a receptor for the preprotein-SecB complex and as an ATP-driven molecular motor driving the stepwise translocation of polypeptide chains across the membrane. The sequence is that of Protein translocase subunit SecA from Cereibacter sphaeroides (strain ATCC 17025 / ATH 2.4.3) (Rhodobacter sphaeroides).